The chain runs to 344 residues: MHPKEGAEQHVFSPVPGAPTPPPNRCGRLVLGPRLPAAGTPGPGIRAAAARHALPLWGGGATRRGRRPAGAAGGGVAARAGALGAARCRPPEAGRHRGGRRGPGPAGAGPVARGGGAGGRGGGAGRGGAGPRGHVLVQVPEAGAGRRALLGRYCQQTPAPGAERELRPAPPTGASASGRPRRPRRRASRAFCPRPCALPGRPGLTLLCRPRCRRQPRLRLPTDSLDPYSAPGRLPAHSVACPSDLVSAHPVLSFFPTAPASRASALRLPPGAPFALRVPLDLRVPPFAGPLAARPRAADGFNSPTPPWLGFVSSFSCSNSLKKTQNDPTNETSVFANPRQQCAT.

Disordered stretches follow at residues 1 to 44, 58 to 134, 158 to 188, and 320 to 344; these read MHPK…PGPG, GGGA…PRGH, PAPG…RRAS, and SLKK…QCAT. Residues 77-88 are compositionally biased toward low complexity; it reads AARAGALGAARC. A compositionally biased stretch (gly residues) spans 101–131; that stretch reads RGPGPAGAGPVARGGGAGGRGGGAGRGGAGP. A compositionally biased stretch (basic residues) spans 179 to 188; it reads RPRRPRRRAS.

As to quaternary structure, interacts with isoform 1 and isoform 2.

The protein resides in the nucleus. The chain is Laforin, isoform 9 from Homo sapiens (Human).